The primary structure comprises 216 residues: Small ribosomal subunit protein uS3 (216 aa).

A KH type-2 domain is found at Leu38–Lys108.

Belongs to the universal ribosomal protein uS3 family. As to quaternary structure, part of the 30S ribosomal subunit. Forms a tight complex with proteins S10 and S14.

Its function is as follows. Binds the lower part of the 30S subunit head. Binds mRNA in the 70S ribosome, positioning it for translation. The protein is Small ribosomal subunit protein uS3 of Desulfosudis oleivorans (strain DSM 6200 / JCM 39069 / Hxd3) (Desulfococcus oleovorans).